Here is a 73-residue protein sequence, read N- to C-terminus: Crustacean hyperglycemic hormone (73 aa).

Intrachain disulfides connect cysteine 7–cysteine 43, cysteine 23–cysteine 39, and cysteine 26–cysteine 52. Valine 73 carries the valine amide modification.

This sequence belongs to the arthropod CHH/MIH/GIH/VIH hormone family. In terms of tissue distribution, produced by the medulla terminalis X-organ in the eyestalks and transported to the sinus gland where they are stored and released.

The protein resides in the secreted. Hormone found in the sinus gland of isopods and decapods which controls the blood sugar level. Has a secretagogue action over the amylase released from the midgut gland. May act as a stress hormone and may be involved in the control of molting and reproduction. This is Crustacean hyperglycemic hormone from Jasus lalandii (Cape rock lobster).